The primary structure comprises 243 residues: Phosphoribosylaminoimidazole-succinocarboxamide synthase (243 aa).

It belongs to the SAICAR synthetase family.

The enzyme catalyses 5-amino-1-(5-phospho-D-ribosyl)imidazole-4-carboxylate + L-aspartate + ATP = (2S)-2-[5-amino-1-(5-phospho-beta-D-ribosyl)imidazole-4-carboxamido]succinate + ADP + phosphate + 2 H(+). Its pathway is purine metabolism; IMP biosynthesis via de novo pathway; 5-amino-1-(5-phospho-D-ribosyl)imidazole-4-carboxamide from 5-amino-1-(5-phospho-D-ribosyl)imidazole-4-carboxylate: step 1/2. The protein is Phosphoribosylaminoimidazole-succinocarboxamide synthase of Lactiplantibacillus plantarum (strain ATCC BAA-793 / NCIMB 8826 / WCFS1) (Lactobacillus plantarum).